The primary structure comprises 206 residues: Small ribosomal subunit protein uS4 (206 aa).

Residues 27–47 (PSESKCNMNAAPGQHGGRRGR) are disordered. Residues 96–158 (QRLDNVVYRM…SRKQIRIQSA (63 aa)) form the S4 RNA-binding domain.

The protein belongs to the universal ribosomal protein uS4 family. Part of the 30S ribosomal subunit. Contacts protein S5. The interaction surface between S4 and S5 is involved in control of translational fidelity.

One of the primary rRNA binding proteins, it binds directly to 16S rRNA where it nucleates assembly of the body of the 30S subunit. Functionally, with S5 and S12 plays an important role in translational accuracy. This Dichelobacter nodosus (strain VCS1703A) protein is Small ribosomal subunit protein uS4.